Consider the following 207-residue polypeptide: GTP-binding protein RHO1 (207 aa).

GTP is bound at residue 18-25 (GDGACGKT). The Effector region signature appears at 40–48 (YVPTVFDNY). Residues 65-69 (DTAGQ) and 123-126 (CKAD) contribute to the GTP site. The interval 187–207 (GKQGKSKAKSDKKKKKKCVVL) is disordered. Residues 190–207 (GKSKAKSDKKKKKKCVVL) show a composition bias toward basic residues. Cys-204 bears the Cysteine methyl ester mark. Residue Cys-204 is the site of S-geranylgeranyl cysteine attachment. The propeptide at 205 to 207 (VVL) is removed in mature form.

It belongs to the small GTPase superfamily. Rho family.

It is found in the cell membrane. In terms of biological role, involved in the regulation of actin polarization. Rho proteins are required for distinct steps during polarized hyphal growth of A.gossypii. The protein is GTP-binding protein RHO1 (RHO1) of Eremothecium gossypii (strain ATCC 10895 / CBS 109.51 / FGSC 9923 / NRRL Y-1056) (Yeast).